We begin with the raw amino-acid sequence, 338 residues long: Lipoate-protein ligase A (338 aa).

In terms of domain architecture, BPL/LPL catalytic spans 29 to 216; the sequence is PATQRVLFLW…AFFEHYSERV (188 aa). ATP-binding positions include Arg71, 76–79, and Lys134; that span reads GAVF. Residue Lys134 participates in (R)-lipoate binding.

The protein belongs to the LplA family. As to quaternary structure, monomer.

Its subcellular location is the cytoplasm. It catalyses the reaction L-lysyl-[lipoyl-carrier protein] + (R)-lipoate + ATP = N(6)-[(R)-lipoyl]-L-lysyl-[lipoyl-carrier protein] + AMP + diphosphate + H(+). Its pathway is protein modification; protein lipoylation via exogenous pathway; protein N(6)-(lipoyl)lysine from lipoate: step 1/2. The protein operates within protein modification; protein lipoylation via exogenous pathway; protein N(6)-(lipoyl)lysine from lipoate: step 2/2. Functionally, catalyzes both the ATP-dependent activation of exogenously supplied lipoate to lipoyl-AMP and the transfer of the activated lipoyl onto the lipoyl domains of lipoate-dependent enzymes. In Enterobacter sp. (strain 638), this protein is Lipoate-protein ligase A.